Reading from the N-terminus, the 95-residue chain is Alpha-conotoxin VxXXB (95 aa).

Residues 1–24 (MPKLAVVLLVLLILPLSYFDAAGG) form the signal peptide. A propeptide spanning residues 25-45 (QAVQGDWRGNRLARDLQRGGR) is cleaved from the precursor. 2 positions are modified to 4-carboxyglutamate: E48 and E50. P59 carries the 4-hydroxyproline; partial modification. Disulfide bonds link C64–C73, C69–C81, C74–C91, and C79–C93. P75 carries the post-translational modification 4-hydroxyproline; partial. 4-hydroxyproline; partial is present on P94. P94 bears the Proline amide; in form [desGly-95]VxXXB mark.

It belongs to the conotoxin D superfamily. Homodimer. Pseudo-homodimer (identical sequence, different post-translational modifications). Expressed by the venom duct.

The protein localises to the secreted. Functionally, alpha-conotoxins act on postsynaptic membranes, they bind to the nicotinic acetylcholine receptors (nAChR) and thus inhibit them. Through its two C-terminal domains, this homodimeric protein would bind to two nAChR allosteric sites, located outside the nAChR C-loop of the principal binding face and at the adjacent binding interface in a clockwise direction. It specifically blocks mammalian neuronal nAChR of the alpha-7/CHRNA7 (IC(50)=0.4 nM), alpha-3-beta-2/CHRNA3-CHRNB2 (IC(50)=8.4 nM) and alpha-4-beta-2/CHRNA4-CHRNB2 (IC(50)=228 nM) subtypes. It inhibits alpha-7/CHRNA7, alpha-3-beta-2/CHRNA3-CHRNB2 and alpha-4-beta-2/CHRNA4-CHRNB2 nAChR subtypes more efficiently than VxXXA and VxXXC. The protein is Alpha-conotoxin VxXXB of Conus vexillum (Flag cone).